A 158-amino-acid polypeptide reads, in one-letter code: SsrA-binding protein (158 aa).

Positions 136–151 (KRADSKSRDWARDKQR) are enriched in basic and acidic residues. Positions 136-158 (KRADSKSRDWARDKQRIMKHSTR) are disordered.

Belongs to the SmpB family.

The protein resides in the cytoplasm. Its function is as follows. Required for rescue of stalled ribosomes mediated by trans-translation. Binds to transfer-messenger RNA (tmRNA), required for stable association of tmRNA with ribosomes. tmRNA and SmpB together mimic tRNA shape, replacing the anticodon stem-loop with SmpB. tmRNA is encoded by the ssrA gene; the 2 termini fold to resemble tRNA(Ala) and it encodes a 'tag peptide', a short internal open reading frame. During trans-translation Ala-aminoacylated tmRNA acts like a tRNA, entering the A-site of stalled ribosomes, displacing the stalled mRNA. The ribosome then switches to translate the ORF on the tmRNA; the nascent peptide is terminated with the 'tag peptide' encoded by the tmRNA and targeted for degradation. The ribosome is freed to recommence translation, which seems to be the essential function of trans-translation. This Photobacterium profundum (strain SS9) protein is SsrA-binding protein.